The chain runs to 369 residues: 4-hydroxy-3-methylbut-2-en-1-yl diphosphate synthase (flavodoxin) (369 aa).

[4Fe-4S] cluster is bound by residues Cys270, Cys273, Cys305, and Glu312.

This sequence belongs to the IspG family. It depends on [4Fe-4S] cluster as a cofactor.

It catalyses the reaction (2E)-4-hydroxy-3-methylbut-2-enyl diphosphate + oxidized [flavodoxin] + H2O + 2 H(+) = 2-C-methyl-D-erythritol 2,4-cyclic diphosphate + reduced [flavodoxin]. Its pathway is isoprenoid biosynthesis; isopentenyl diphosphate biosynthesis via DXP pathway; isopentenyl diphosphate from 1-deoxy-D-xylulose 5-phosphate: step 5/6. Converts 2C-methyl-D-erythritol 2,4-cyclodiphosphate (ME-2,4cPP) into 1-hydroxy-2-methyl-2-(E)-butenyl 4-diphosphate. In Haemophilus ducreyi (strain 35000HP / ATCC 700724), this protein is 4-hydroxy-3-methylbut-2-en-1-yl diphosphate synthase (flavodoxin).